Here is a 622-residue protein sequence, read N- to C-terminus: V-type ATP synthase subunit I 1 (622 aa).

8 helical membrane-spanning segments follow: residues Trp306–Val326, Ile328–Gly348, Pro373–Cys393, Gln428–Val448, Ala459–Val479, Pro485–Val505, Val532–Ile552, and Pro562–Leu582.

The protein belongs to the V-ATPase 116 kDa subunit family.

It localises to the cell membrane. Produces ATP from ADP in the presence of a proton gradient across the membrane. The protein is V-type ATP synthase subunit I 1 (atpI1) of Treponema pallidum (strain Nichols).